Reading from the N-terminus, the 502-residue chain is Calnexin homolog (502 aa).

Positions M1 to G19 are cleaved as a signal peptide. Residues T20–K481 lie on the Lumenal side of the membrane. N-linked (GlcNAc...) asparagine glycans are attached at residues N25 and N104. C125 and C161 are oxidised to a cystine. Residues K131 and D159 each contribute to the an alpha-D-glucoside site. The segment at I248 to E381 is p domain (Extended arm). Repeat copies occupy residues D250–D261, D267–E278, H286–S297, D305–E316, and G320–P330. 2 4 X approximate repeats regions span residues D250–E316 and G320–P377. N-linked (GlcNAc...) asparagine glycosylation occurs at N296. A disulfide bridge links C332 with C338. 3 tandem repeats follow at residues G339 to A349, G353 to P363, and G367 to P377. E398 provides a ligand contact to an alpha-D-glucoside. N-linked (GlcNAc...) asparagine glycans are attached at residues N416 and N425. Residues F482 to T502 form a helical membrane-spanning segment.

Belongs to the calreticulin family. Interacts with MPD1.

It is found in the endoplasmic reticulum membrane. In terms of biological role, interacts with newly synthesized monoglucosylated glycoproteins in the endoplasmic reticulum. It may act in assisting protein assembly and/or in the retention within the ER of unassembled protein subunits. It seems to play a major role in the quality control apparatus of the ER by the retention of incorrectly folded proteins. The sequence is that of Calnexin homolog (CNE1) from Saccharomyces cerevisiae (strain ATCC 204508 / S288c) (Baker's yeast).